Reading from the N-terminus, the 217-residue chain is N-(5'-phosphoribosyl)anthranilate isomerase (217 aa).

It belongs to the TrpF family.

The enzyme catalyses N-(5-phospho-beta-D-ribosyl)anthranilate = 1-(2-carboxyphenylamino)-1-deoxy-D-ribulose 5-phosphate. Its pathway is amino-acid biosynthesis; L-tryptophan biosynthesis; L-tryptophan from chorismate: step 3/5. In Chlorobium chlorochromatii (strain CaD3), this protein is N-(5'-phosphoribosyl)anthranilate isomerase.